The sequence spans 241 residues: Ribulose-phosphate 3-epimerase 2 (241 aa).

Ser-21 contacts substrate. His-46, Asp-48, and His-79 together coordinate a divalent metal cation. The Proton acceptor role is filled by Asp-48. Substrate is bound by residues His-79, 155–158, 192–194, and 214–215; these read GFGG, DGG, and GS. Residue Asp-192 participates in a divalent metal cation binding. Asp-192 functions as the Proton donor in the catalytic mechanism.

The protein belongs to the ribulose-phosphate 3-epimerase family. It depends on a divalent metal cation as a cofactor.

The catalysed reaction is D-ribulose 5-phosphate = D-xylulose 5-phosphate. It participates in carbohydrate degradation. Catalyzes the reversible epimerization of D-ribulose 5-phosphate to D-xylulose 5-phosphate. The chain is Ribulose-phosphate 3-epimerase 2 from Cupriavidus necator (strain ATCC 17699 / DSM 428 / KCTC 22496 / NCIMB 10442 / H16 / Stanier 337) (Ralstonia eutropha).